A 192-amino-acid chain; its full sequence is uncharacterized protein (192 aa).

A Nudix hydrolase domain is found at 29 to 160 (QRQAAVLIPV…PLDVYRRGNS (132 aa)). Residues 67–89 (GAVDSTDASLIAAALREAQEEVA) carry the Nudix box motif. Mg(2+)-binding residues include Glu83 and Glu87.

The protein belongs to the Nudix hydrolase family. PCD1 subfamily. It depends on Mn(2+) as a cofactor. The cofactor is Mg(2+).

Its function is as follows. Probably mediates the hydrolysis of some nucleoside diphosphate derivatives. This is an uncharacterized protein from Salmonella choleraesuis (strain SC-B67).